Reading from the N-terminus, the 184-residue chain is Large ribosomal subunit protein uL6 (184 aa).

It belongs to the universal ribosomal protein uL6 family. In terms of assembly, part of the 50S ribosomal subunit.

Its function is as follows. This protein binds to the 23S rRNA, and is important in its secondary structure. It is located near the subunit interface in the base of the L7/L12 stalk, and near the tRNA binding site of the peptidyltransferase center. The chain is Large ribosomal subunit protein uL6 from Salinibacter ruber (strain DSM 13855 / M31).